The primary structure comprises 306 residues: Phosphoribosylaminoimidazole-succinocarboxamide synthase (306 aa).

The residue at position 2 (S2) is an N-acetylserine.

The protein belongs to the SAICAR synthetase family. In terms of assembly, monomer.

The enzyme catalyses 5-amino-1-(5-phospho-D-ribosyl)imidazole-4-carboxylate + L-aspartate + ATP = (2S)-2-[5-amino-1-(5-phospho-beta-D-ribosyl)imidazole-4-carboxamido]succinate + ADP + phosphate + 2 H(+). Its pathway is purine metabolism; IMP biosynthesis via de novo pathway; 5-amino-1-(5-phospho-D-ribosyl)imidazole-4-carboxamide from 5-amino-1-(5-phospho-D-ribosyl)imidazole-4-carboxylate: step 1/2. Catalyzes the reaction of 4-carboxy-5-aminoimidazole ribotide (CAIR) and aspartic acid with the formation of N-succinyl-5-amino-imidazole-4-carboxamide ribotide (SAICAR) in the purine biosynthesis pathway. The protein is Phosphoribosylaminoimidazole-succinocarboxamide synthase (ADE1) of Saccharomyces cerevisiae (strain ATCC 204508 / S288c) (Baker's yeast).